A 369-amino-acid chain; its full sequence is Cyclin-I2 (369 aa).

Residues 1-116 are disordered; the sequence is MASGAQLPPQ…SRKPRNLEGD (116 aa). Composition is skewed to low complexity over residues 64 to 76 and 83 to 101; these read AASLHAASAAVPV and APAGKTADAVPAAAPEQAP.

The protein belongs to the cyclin family.

This is Cyclin-I2 (CCNI2) from Homo sapiens (Human).